Reading from the N-terminus, the 327-residue chain is Malate dehydrogenase (327 aa).

Position 12 to 18 (12 to 18) interacts with NAD(+); that stretch reads GAAGQIA. Residues arginine 93 and arginine 99 each contribute to the substrate site. NAD(+) contacts are provided by residues asparagine 106, glutamine 113, and 130-132; that span reads VGN. Residues asparagine 132 and arginine 163 each contribute to the substrate site. The active-site Proton acceptor is the histidine 188.

Belongs to the LDH/MDH superfamily. MDH type 2 family.

It carries out the reaction (S)-malate + NAD(+) = oxaloacetate + NADH + H(+). Functionally, catalyzes the reversible oxidation of malate to oxaloacetate. The polypeptide is Malate dehydrogenase (Paraburkholderia phytofirmans (strain DSM 17436 / LMG 22146 / PsJN) (Burkholderia phytofirmans)).